Here is a 361-residue protein sequence, read N- to C-terminus: Aminomethyltransferase (361 aa).

Belongs to the GcvT family. The glycine cleavage system is composed of four proteins: P, T, L and H.

It carries out the reaction N(6)-[(R)-S(8)-aminomethyldihydrolipoyl]-L-lysyl-[protein] + (6S)-5,6,7,8-tetrahydrofolate = N(6)-[(R)-dihydrolipoyl]-L-lysyl-[protein] + (6R)-5,10-methylene-5,6,7,8-tetrahydrofolate + NH4(+). In terms of biological role, the glycine cleavage system catalyzes the degradation of glycine. The polypeptide is Aminomethyltransferase (Herpetosiphon aurantiacus (strain ATCC 23779 / DSM 785 / 114-95)).